A 566-amino-acid chain; its full sequence is Arginine--tRNA ligase (566 aa).

The 'HIGH' region motif lies at 121–131; it reads ANPNGPFHIGH.

This sequence belongs to the class-I aminoacyl-tRNA synthetase family.

The protein resides in the cytoplasm. The catalysed reaction is tRNA(Arg) + L-arginine + ATP = L-arginyl-tRNA(Arg) + AMP + diphosphate. The polypeptide is Arginine--tRNA ligase (Methanococcus maripaludis (strain C7 / ATCC BAA-1331)).